The chain runs to 240 residues: Uridylate kinase (240 aa).

K13–G16 provides a ligand contact to ATP. An involved in allosteric activation by GTP region spans residues G21–G26. G55 provides a ligand contact to UMP. Residues G56 and R60 each coordinate ATP. Residues D75 and I136 to T143 contribute to the UMP site. ATP-binding residues include N164, Y170, and D173.

This sequence belongs to the UMP kinase family. Homohexamer.

The protein localises to the cytoplasm. The enzyme catalyses UMP + ATP = UDP + ADP. Its pathway is pyrimidine metabolism; CTP biosynthesis via de novo pathway; UDP from UMP (UMPK route): step 1/1. With respect to regulation, allosterically activated by GTP. Inhibited by UTP. In terms of biological role, catalyzes the reversible phosphorylation of UMP to UDP. The protein is Uridylate kinase of Staphylococcus epidermidis (strain ATCC 35984 / DSM 28319 / BCRC 17069 / CCUG 31568 / BM 3577 / RP62A).